The sequence spans 289 residues: Diaminopimelate epimerase (289 aa).

Residues Asn15 and Asn76 each contribute to the substrate site. Residue Cys85 is the Proton donor of the active site. Residues 86-87, Asn158, Asn191, and 209-210 each bind substrate; these read GN and ER. Residue Cys218 is the Proton acceptor of the active site. 219–220 is a substrate binding site; it reads GT.

It belongs to the diaminopimelate epimerase family. As to quaternary structure, homodimer.

It localises to the cytoplasm. It catalyses the reaction (2S,6S)-2,6-diaminopimelate = meso-2,6-diaminopimelate. Its pathway is amino-acid biosynthesis; L-lysine biosynthesis via DAP pathway; DL-2,6-diaminopimelate from LL-2,6-diaminopimelate: step 1/1. Functionally, catalyzes the stereoinversion of LL-2,6-diaminopimelate (L,L-DAP) to meso-diaminopimelate (meso-DAP), a precursor of L-lysine and an essential component of the bacterial peptidoglycan. This chain is Diaminopimelate epimerase, found in Streptomyces coelicolor (strain ATCC BAA-471 / A3(2) / M145).